The sequence spans 347 residues: NADH-ubiquinone oxidoreductase chain 2 (347 aa).

9 consecutive transmembrane segments (helical) span residues 3–23, 25–45, 59–79, 111–131, 149–169, 200–220, 242–262, 274–294, and 325–345; these read PPIFIIIMTTVISGTMMVLIS, HWLLIWIGFEMNMLAIIPILM, YFLTQATASMILMLGIIINLL, FHFWVPEVTQGISLSSGMILL, INPNLLMSMAIMSMLVAGWGG, LMHLNLVMYIMMTLGTFMLFM, LLILMLMLSLGGLPPLSGFIP, NMIIIPTFMAIAALLSLYFYM, and LLPPLIIMSTMLLPMTPMMLI.

This sequence belongs to the complex I subunit 2 family. Core subunit of respiratory chain NADH dehydrogenase (Complex I) which is composed of 45 different subunits. Interacts with TMEM242.

The protein resides in the mitochondrion inner membrane. The catalysed reaction is a ubiquinone + NADH + 5 H(+)(in) = a ubiquinol + NAD(+) + 4 H(+)(out). Functionally, core subunit of the mitochondrial membrane respiratory chain NADH dehydrogenase (Complex I) which catalyzes electron transfer from NADH through the respiratory chain, using ubiquinone as an electron acceptor. Essential for the catalytic activity and assembly of complex I. The polypeptide is NADH-ubiquinone oxidoreductase chain 2 (Ailurus fulgens (Himalayan red panda)).